Reading from the N-terminus, the 497-residue chain is Sestrin homolog (497 aa).

Residues Ser185 and Ser190 each carry the phosphoserine modification. Positions 226–241 (NANPDYDSQTAASSNG) are enriched in polar residues. Residues 226-255 (NANPDYDSQTAASSNGGAPPDSANAVADGP) are disordered.

It belongs to the sestrin family. Associates with the GATOR2 complex; the interaction is probably direct. Associates with the GATOR1 complex; the interaction is probably indirect and mediated by the GATOR2 complex. Highly expressed in muscle-enriched tissues (at protein level).

Its subcellular location is the nucleus. It localises to the cytoplasm. In terms of biological role, functions as a negative feedback regulator of mTOR function. In Drosophila melanogaster (Fruit fly), this protein is Sestrin homolog.